We begin with the raw amino-acid sequence, 292 residues long: Bifunctional protein FolD (292 aa).

Residues 166–168, Ser191, and Ile232 each bind NADP(+); that span reads GRS.

It belongs to the tetrahydrofolate dehydrogenase/cyclohydrolase family. In terms of assembly, homodimer.

It carries out the reaction (6R)-5,10-methylene-5,6,7,8-tetrahydrofolate + NADP(+) = (6R)-5,10-methenyltetrahydrofolate + NADPH. The catalysed reaction is (6R)-5,10-methenyltetrahydrofolate + H2O = (6R)-10-formyltetrahydrofolate + H(+). The protein operates within one-carbon metabolism; tetrahydrofolate interconversion. In terms of biological role, catalyzes the oxidation of 5,10-methylenetetrahydrofolate to 5,10-methenyltetrahydrofolate and then the hydrolysis of 5,10-methenyltetrahydrofolate to 10-formyltetrahydrofolate. The sequence is that of Bifunctional protein FolD from Synechococcus sp. (strain RCC307).